The chain runs to 538 residues: MALPYHIFLFTVLLPSFTLTAPPPCRCMTSSSPYQEFLWRMQRPGNIDAPSYRSLSKGTPTFTAHTHMPRNCYHSATLCMHANTHYWTGKMINPSCPGGLGVTVCWTYFTQTGMSDGGGVQDQAREKHVKEVISQLTRVHGTSSPYKGLDLSKLHETLRTHTRLVSLFNTTLTGLHEVSAQNPTNCWICLPLNFRPYVSIPVPEQWNNFSTEINTTSVLVGPLVSNLEITHTSNLTCVKFSNTTYTTNSQCIRWVTPPTQIVCLPSGIFFVCGTSAYRCLNGSSESMCFLSFLVPPMTIYTEQDLYSYVISKPRNKRVPILPFVIGAGVLGALGTGIGGITTSTQFYYKLSQELNGDMERVADSLVTLQDQLNSLAAVVLQNRRALDLLTAERGGTCLFLGEECCYYVNQSGIVTEKVKEIRDRIQRRAEELRNTGPWGLLSQWMPWILPFLGPLAAIILLLLFGPCIFNLLVNFVSSRIEAVKLQMEPKMQSKTKIYRRPLDRPASPRSDVNDIKGTPPEEISAAQPLLRPNSAGSS.

The N-terminal stretch at 1-20 (MALPYHIFLFTVLLPSFTLT) is a signal peptide. Topologically, residues 21-443 (APPPCRCMTS…NTGPWGLLSQ (423 aa)) are extracellular. An N-linked (GlcNAc...) asparagine glycan is attached at asparagine 169. The short motif at 186 to 189 (CWIC) is the CXXC element. 3 disulfides stabilise this stretch: cysteine 186–cysteine 189, cysteine 186–cysteine 405, and cysteine 397–cysteine 404. N-linked (GlcNAc...) asparagine glycosylation is found at asparagine 208, asparagine 214, asparagine 234, asparagine 242, and asparagine 281. A fusion peptide region spans residues 320-340 (ILPFVIGAGVLGALGTGIGGI). The interval 380-396 (LQNRRALDLLTAERGGT) is immunosuppression. Residues 397–406 (CLFLGEECCY) carry the CX6CC motif. N-linked (GlcNAc...) asparagine glycosylation occurs at asparagine 409. Residues 444 to 464 (WMPWILPFLGPLAAIILLLLF) form a helical membrane-spanning segment. The segment at 465–484 (GPCIFNLLVNFVSSRIEAVK) is essential for the fusiogenic function. The Cytoplasmic segment spans residues 465 to 538 (GPCIFNLLVN…LLRPNSAGSS (74 aa)). Positions 496-538 (KIYRRPLDRPASPRSDVNDIKGTPPEEISAAQPLLRPNSAGSS) are disordered.

This sequence belongs to the gamma type-C retroviral envelope protein family. HERV class-I W env subfamily. The mature envelope protein (Env) consists of a trimer of SU-TM heterodimers attached probably by a labile interchain disulfide bond. Interacts with the C-type lectin CD209/DC-SIGN. Post-translationally, specific enzymatic cleavages in vivo yield mature proteins. Envelope glycoproteins are synthesized as an inactive precursor that is heavily N-glycosylated and processed likely by furin in the Golgi to yield the mature SU and TM proteins. The cleavage site between SU and TM requires the minimal sequence [KR]-X-[KR]-R. The intracytoplasmic tail cleavage by the viral protease that is required for the fusiogenic activity of some retroviruses envelope proteins seems to have been lost during evolution. The CXXC motif is highly conserved across a broad range of retroviral envelope proteins. It is thought to participate in the formation of a labile disulfide bond possibly with the CX6CC motif present in the transmembrane protein. Isomerization of the intersubunit disulfide bond to an SU intrachain disulfide bond is thought to occur upon receptor recognition in order to allow membrane fusion. As to expression, expressed at higher level in placental syncytiotrophoblast. Expressed at intermediate level in testis. Seems also to be found at low level in adrenal tissue, bone marrow, breast, colon, kidney, ovary, prostate, skin, spleen, thymus, thyroid, brain and trachea. Both mRNA and protein levels are significantly increased in the brain of individuals with multiple sclerosis, particularly in astrocytes and microglia.

It is found in the cell membrane. Its subcellular location is the virion. Functionally, this endogenous retroviral envelope protein has retained its original fusogenic properties and participates in trophoblast fusion and the formation of a syncytium during placenta morphogenesis. May induce fusion through binding of SLC1A4 and SLC1A5. In terms of biological role, endogenous envelope proteins may have kept, lost or modified their original function during evolution. Retroviral envelope proteins mediate receptor recognition and membrane fusion during early infection. The surface protein (SU) mediates receptor recognition, while the transmembrane protein (TM) acts as a class I viral fusion protein. The protein may have at least 3 conformational states: pre-fusion native state, pre-hairpin intermediate state, and post-fusion hairpin state. During viral and target cell membrane fusion, the coiled coil regions (heptad repeats) assume a trimer-of-hairpins structure, positioning the fusion peptide in close proximity to the C-terminal region of the ectodomain. The formation of this structure appears to drive apposition and subsequent fusion of membranes. This Homo sapiens (Human) protein is Syncytin-1 (ERVW-1).